Here is a 197-residue protein sequence, read N- to C-terminus: Protein shisa-4 (197 aa).

The first 27 residues, M1–A27, serve as a signal peptide directing secretion. At G28–A87 the chain is on the extracellular side. Residues G88–L108 traverse the membrane as a helical segment. The Cytoplasmic portion of the chain corresponds to C109–A197.

This sequence belongs to the shisa family.

It is found in the membrane. This is Protein shisa-4 (SHISA4) from Homo sapiens (Human).